The primary structure comprises 100 residues: Aspartyl/glutamyl-tRNA(Asn/Gln) amidotransferase subunit C (100 aa).

This sequence belongs to the GatC family. As to quaternary structure, heterotrimer of A, B and C subunits.

The enzyme catalyses L-glutamyl-tRNA(Gln) + L-glutamine + ATP + H2O = L-glutaminyl-tRNA(Gln) + L-glutamate + ADP + phosphate + H(+). It catalyses the reaction L-aspartyl-tRNA(Asn) + L-glutamine + ATP + H2O = L-asparaginyl-tRNA(Asn) + L-glutamate + ADP + phosphate + 2 H(+). Allows the formation of correctly charged Asn-tRNA(Asn) or Gln-tRNA(Gln) through the transamidation of misacylated Asp-tRNA(Asn) or Glu-tRNA(Gln) in organisms which lack either or both of asparaginyl-tRNA or glutaminyl-tRNA synthetases. The reaction takes place in the presence of glutamine and ATP through an activated phospho-Asp-tRNA(Asn) or phospho-Glu-tRNA(Gln). In Rickettsia typhi (strain ATCC VR-144 / Wilmington), this protein is Aspartyl/glutamyl-tRNA(Asn/Gln) amidotransferase subunit C.